The sequence spans 717 residues: Methionine--tRNA ligase (717 aa).

Positions 19 to 29 match the 'HIGH' region motif; sequence PYANGDLHVGH. Zn(2+) contacts are provided by cysteine 150, cysteine 153, cysteine 162, and cysteine 166. The 'KMSKS' region motif lies at 356–360; that stretch reads ALSTS. Threonine 359 lines the ATP pocket. Residues 573–603 form a disordered region; it reads ERVEEASEASAEASNEGGEAAGDEVDDGDVD. A compositionally biased stretch (low complexity) spans 580–590; it reads EASAEASNEGG. The span at 593–603 shows a compositional bias: acidic residues; the sequence is AGDEVDDGDVD. In terms of domain architecture, tRNA-binding spans 619 to 717; that stretch reads DFEGVDMRVG…EDAPLGTRIK (99 aa).

It belongs to the class-I aminoacyl-tRNA synthetase family. MetG type 1 subfamily. Homodimer. The cofactor is Zn(2+).

It is found in the cytoplasm. It carries out the reaction tRNA(Met) + L-methionine + ATP = L-methionyl-tRNA(Met) + AMP + diphosphate. In terms of biological role, is required not only for elongation of protein synthesis but also for the initiation of all mRNA translation through initiator tRNA(fMet) aminoacylation. In Haloarcula marismortui (strain ATCC 43049 / DSM 3752 / JCM 8966 / VKM B-1809) (Halobacterium marismortui), this protein is Methionine--tRNA ligase.